Here is a 320-residue protein sequence, read N- to C-terminus: Nicotianamine synthase 2 (320 aa).

The protein belongs to the nicotianamine synthase (NAS)-like family.

It carries out the reaction 3 S-adenosyl-L-methionine = nicotianamine + 3 S-methyl-5'-thioadenosine + 3 H(+). Synthesizes nicotianamine, a polyamine which serves as a sensor for the physiological iron status within the plant, and/or might be involved in the transport of iron. The chain is Nicotianamine synthase 2 (NAS2) from Arabidopsis thaliana (Mouse-ear cress).